A 453-amino-acid polypeptide reads, in one-letter code: Protein IVY1 (453 aa).

Residues 1–16 (MPDNNTEQLQGSPSSD) are compositionally biased toward polar residues. Residues 1–20 (MPDNNTEQLQGSPSSDQRLR) form a disordered region. Phosphoserine is present on residues serine 59, serine 84, and serine 85. 2 coiled-coil regions span residues 102-122 (KRDV…SNAY) and 230-257 (IRNL…KHDF). 2 disordered regions span residues 316-340 (DGPY…EETG) and 353-453 (TSQP…SSNI). Phosphoserine is present on serine 335. A compositionally biased stretch (low complexity) spans 353 to 371 (TSQPSTSKTSLPKSKGSST). 2 stretches are compositionally biased toward polar residues: residues 372-384 (VSTP…SSNK) and 404-429 (LMGT…TFKQ). Residues 431-442 (SIKEDNDNHSSD) are compositionally biased toward basic and acidic residues. The segment covering 443-453 (TDGMQDQSSNI) has biased composition (polar residues).

Homomultimer. Interacts with YPT7 and VPS33.

The protein localises to the vacuole membrane. May be required for vacuolar fusion. Overexpression leads to fragmentation of vacuoles, missorting of the vacuolar enzyme carboxypeptidase Y (CPY) to the exterior of the cell and accumulation of multivesicular bodies inside the cell. The polypeptide is Protein IVY1 (IVY1) (Saccharomyces cerevisiae (strain ATCC 204508 / S288c) (Baker's yeast)).